The primary structure comprises 478 residues: Methionine aminopeptidase 2 (478 aa).

A disordered region spans residues 1 to 122 (MAGVEEVAAS…TDPPSVPICD (122 aa)). Residue Ala-2 is modified to N-acetylalanine. Residues 36–46 (KKKRRKKKKSK) are compositionally biased toward basic residues. Ser-45 is subject to Phosphoserine. A compositionally biased stretch (basic and acidic residues) spans 55 to 79 (EPDKESGASVDEVARQLERSALEDK). Residues Ser-60 and Ser-63 each carry the phosphoserine; alternate modification. Ser-60 and Ser-63 each carry an O-linked (GlcNAc) serine; alternate glycan. Ser-74 carries the phosphoserine modification. A compositionally biased stretch (acidic residues) spans 80–92 (ERDEDDEDGDGDG). A compositionally biased stretch (basic residues) spans 97–109 (GKKKKKKKKKRGP). His-231 serves as a coordination point for substrate. The a divalent metal cation site is built by Asp-251, Asp-262, and His-331. Residue His-339 coordinates substrate. The a divalent metal cation site is built by Glu-364 and Glu-459.

Belongs to the peptidase M24A family. Methionine aminopeptidase eukaryotic type 2 subfamily. In terms of assembly, interacts strongly with the eIF-2 gamma-subunit EIF2S3. Binds EIF2S1 at low magnesium concentrations. Co(2+) serves as cofactor. The cofactor is Zn(2+). Requires Mn(2+) as cofactor. Fe(2+) is required as a cofactor. In terms of processing, contains approximately 12 O-linked N-acetylglucosamine (GlcNAc) residues. O-glycosylation is required for EIF2S1 binding.

It localises to the cytoplasm. The enzyme catalyses Release of N-terminal amino acids, preferentially methionine, from peptides and arylamides.. Its function is as follows. Cotranslationally removes the N-terminal methionine from nascent proteins. The N-terminal methionine is often cleaved when the second residue in the primary sequence is small and uncharged (Met-Ala-, Cys, Gly, Pro, Ser, Thr, or Val). The catalytic activity of human METAP2 toward Met-Val peptides is consistently two orders of magnitude higher than that of METAP1, suggesting that it is responsible for processing proteins containing N-terminal Met-Val and Met-Thr sequences in vivo. Protects eukaryotic initiation factor EIF2S1 from translation-inhibiting phosphorylation by inhibitory kinases such as EIF2AK2/PKR and EIF2AK1/HCR. Plays a critical role in the regulation of protein synthesis. This chain is Methionine aminopeptidase 2, found in Homo sapiens (Human).